The primary structure comprises 418 residues: Tyrosine--tRNA ligase (418 aa).

Tyr34 provides a ligand contact to L-tyrosine. The 'HIGH' region motif lies at 39–48; it reads PTADSLHLGH. L-tyrosine-binding residues include Tyr169 and Gln173. The 'KMSKS' region motif lies at 229–233; the sequence is KFGKS. Lys232 is an ATP binding site. The 67-residue stretch at 352–418 folds into the S4 RNA-binding domain; that stretch reads NNIVELLVSS…GKKKYFVLTY (67 aa).

Belongs to the class-I aminoacyl-tRNA synthetase family. TyrS type 1 subfamily. Homodimer.

Its subcellular location is the cytoplasm. The enzyme catalyses tRNA(Tyr) + L-tyrosine + ATP = L-tyrosyl-tRNA(Tyr) + AMP + diphosphate + H(+). In terms of biological role, catalyzes the attachment of tyrosine to tRNA(Tyr) in a two-step reaction: tyrosine is first activated by ATP to form Tyr-AMP and then transferred to the acceptor end of tRNA(Tyr). This chain is Tyrosine--tRNA ligase, found in Streptococcus pneumoniae (strain Taiwan19F-14).